The sequence spans 179 residues: Probable mitochondrial import inner membrane translocase subunit Tim17 1 (179 aa).

The next 3 helical transmembrane spans lie at 17-37 (CGGA…IKGF), 61-81 (LVGG…CSLV), and 113-133 (LSSA…GIVV).

This sequence belongs to the Tim17/Tim22/Tim23 family. Component of the TIM23 complex at least composed of Tim23, Tim17 (Tim17a1, Tim17a2 or Tim17b1) and a Tim50. The complex interacts with the Tim44 component of the PAM complex.

The protein localises to the mitochondrion inner membrane. Functionally, essential component of the TIM23 complex, a complex that mediates the translocation of transit peptide-containing proteins across the mitochondrial inner membrane. The chain is Probable mitochondrial import inner membrane translocase subunit Tim17 1 (Tim17b1) from Drosophila melanogaster (Fruit fly).